Consider the following 1920-residue polypeptide: MVVPQKKFANGKRNDSTKSFKPMKKPFKKTKDDVAARSEAMALQLEDVPDFPRGGGTSLSKKEREKLYEEVDAEFDADERVSKKSKGGKSKKRIPSDLDDLGLLFGGGLHGKRPRYANKITTKNISPGMKLLGVVTEVNQKDIVISLPGGLRGLVRASEVSDFTDRGIEDDENELLGDIFSVGQLVPCIVLELDDDKKEAGKRKIWLSLRLSLLHKGFSFDSFQLGMVFSANVKSIEDHGSILHFGLPSITGFIEISDDGNQESGMKTGQLIQGVVTKIDRDRKIVHLSSDPDSVAKCLTKDLSGMSFDLLIPGMMVNARVQSVLENGILFDFLTYFNGTVDLFHLKNPLSNKSWKDEYNQNKTVNARILFIDPSSRAVGLTLSPHVVCNKAPPLHVFSGDIFDEAKVVRIDKSGLLLELPSKPTPTPAYVSTYDAAGDEVTKLEKKFKEGNHIRVRVLGLKQMEGLAVGTLKESAFEGPVFTHSDVKPGMVTKAKVISVDTFGAIVQFSGGLKAMCPLRHMSEFEVTKPRKKFKVGAELVFRVLGCKSKRITVTYKKTLVKSKLPILSSYTDATEGLVTHGWITKIEKHGCFVRFYNGVQGFVPRFELGLEPGSDPDSVFHVGEVVKCRVTSAVHGTQRITLSFMIKPSSVSEDDSIKLGSIVSGIIDTITSQAVIVRVKSKSVVKGTISAEHLADHHEQAKLIMSLLRPGYELDKLLVLDIEGNNMALSSKYSLIKLAEELPSDFNQLQPNSVVHGYVCNLIENGCFVRFLGRLTGFAPRSKAIDDPKADVSESFFVGQSVRANIVDVNQEKSRITLSLKQSSCASVDASFVQEYFLMDEKISDLQSSDITKSDCSWVEKFSIGSLIKGTIQEQNDLGVVVNFDNINNVLGFIPQHHMGGATLVPGSVVNAVVLDISRAERLVDLSLRPELLNNLTKEVSNSSKKKRKRGISKELEVHQRVSAVVEIVKEQHLVLSIPEHGYTIGYASVSDYNTQKLPVKQFSTGQSVVASVKAVQNPLTSGRLLLLLDSVSGTSETSRSKRAKKKSSCEVGSVVHAEITEIKPFELRVNFGNSFRGRIHITEVNDASTSDEPFAKFRVGQSISARVVAKPCHTDIKKTQLWELSVKPAMLKDSSEFNDTQESEQLEFAAGQCVIGYVYKVDKEWVWLAVSRNVTARIFILDTSCKAHELEEFERRFPIGKAVSGYVLTYNKEKKTLRLVQRPLLFIHKSIANGGGSKTDKPDSSIPGDDDTLFIHEGDILGGRISKILPGVGGLRVQLGPYVFGRVHFTEINDSWVPDPLDGFREGQFVKCKVLEISSSSKGTWQIELSLRTSLDGMSSADHLSEDLKNNDNVCKRFERIEDLSPDMGVQGYVKNTMSKGCFIILSRTVEAKVRLSNLCDTFVKEPEKEFPVGKLVTGRVLNVEPLSKRIEVTLKTVNAGGRPKSESYDLKKLHVGDMISGRIRRVEPFGLFIDIDQTGMVGLCHISQLSDDRMENVQARYKAGESVRAKILKLDEEKKRISLGMKSSYLMNGDDDKAQPLSEDNTSMECDPINDPKSEVLAAVDDFGFQETSGGTSLVLAQVESRASIPPLEVDLDDIEETDFDSSQNQEKLLGANKDEKSKRREKQKDKEEREKKIQAAEGRLLEHHAPENADEFEKLVRSSPNSSFVWIKYMAFMLSLADIEKARSIAERALRTINIREEEEKLNIWVAYFNLENEHGNPPEESVKKVFERARQYCDPKKVYLALLGVYERTEQYKLADKLLDEMIKKFKQSCKIWLRKIQSSLKQNEEAIQSVVNRALLCLPRHKHIKFISQTAILEFKCGVADRGRSLFEGVLREYPKRTDLWSVYLDQEIRLGEDDVIRSLFERAISLSLPPKKMKFLFKKFLEYEKSVGDEERVEYVKQRAMEYANSTLA.

The segment at 1-65 (MVVPQKKFAN…GTSLSKKERE (65 aa)) is disordered. S1 motif domains are found at residues 128-210 (GMKL…LSLR), 226-291 (GMVF…LSSD), 314-384 (GMMV…LTLS), 400-473 (GDIF…GTLK), 490-557 (GMVT…VTYK), 577-646 (GLVT…LSFM), 661-733 (GSIV…LSSK), 753-822 (NSVV…LSLK), 866-930 (GSLI…LSLR), 958-1031 (EVHQ…LLLD), 1054-1129 (GSVV…LSVK), 1153-1224 (GQCV…LVQR), 1260-1334 (GDIL…LSLR), 1369-1438 (DMGV…VTLK), and 1459-1529 (GDMI…LGMK). 2 disordered regions span residues 1535 to 1555 (NGDD…ECDP) and 1605 to 1652 (TDFD…LEHH). The span at 1620 to 1652 (NKDEKSKRREKQKDKEEREKKIQAAEGRLLEHH) shows a compositional bias: basic and acidic residues. HAT repeat units lie at residues 1651 to 1683 (HHAP…FMLS), 1685 to 1722 (ADIE…LENE), 1726 to 1758 (PPEE…YERT), 1759 to 1791 (EQYK…SSLK), 1828 to 1860 (GVAD…QEIR), and 1862 to 1897 (GEDD…YEKS).

Highly expressed in flowers and at lower levels in roots, leaves, stems and siliques.

It localises to the nucleus. The protein resides in the nucleolus. Its function is as follows. Involved in the biogenesis of ribosomal RNA (rRNA). Required for the formation of 5.8S rRNA. Required for normal development of female gametophytes. The sequence is that of rRNA biogenesis protein RRP5 from Arabidopsis thaliana (Mouse-ear cress).